An 813-amino-acid chain; its full sequence is Hyaluronate lyase HylB (813 aa).

Residues 1-32 (MFGTPSRRTFLTASALSAMALAASPTVTDAIA) constitute a signal peptide (tat-type signal). Residues Asn222, His272, and Tyr281 contribute to the active site.

Belongs to the polysaccharide lyase 8 family. Post-translationally, predicted to be exported by the Tat system. The position of the signal peptide cleavage has not been experimentally proven.

The protein localises to the secreted. The enzyme catalyses [hyaluronan](n) = n 3-(4-deoxy-beta-D-gluc-4-enuronosyl)-N-acetyl-D-glucosamine + H2O. Degrades hyaluronic acid (HA) exclusively into HA disaccharides (HA-2). Produced HA-2s confer anti-inflammatory properties leading to reduced immunopathology in the mouse model of acne. The protein is Hyaluronate lyase HylB of Cutibacterium acnes (strain DSM 16379 / KPA171202) (Propionibacterium acnes).